The sequence spans 96 residues: uncharacterized protein (96 aa).

The N-terminal stretch at 1 to 28 (MNKKAIVGIFMSILMAGLVGCAGSSDAQ) is a signal peptide.

This is an uncharacterized protein from Butyrivibrio fibrisolvens.